A 101-amino-acid polypeptide reads, in one-letter code: NAD(P)H-quinone oxidoreductase subunit 4L (101 aa).

3 helical membrane passes run 3-23 (LRYFLLLAAALFCIGIYGLIT), 30-50 (VLMSIELLLNAVNLNLMAFSN), and 64-84 (VFVITVAAAEAAVGLAIVLAI).

It belongs to the complex I subunit 4L family. As to quaternary structure, NDH-1 can be composed of about 15 different subunits; different subcomplexes with different compositions have been identified which probably have different functions.

The protein localises to the cellular thylakoid membrane. The enzyme catalyses a plastoquinone + NADH + (n+1) H(+)(in) = a plastoquinol + NAD(+) + n H(+)(out). The catalysed reaction is a plastoquinone + NADPH + (n+1) H(+)(in) = a plastoquinol + NADP(+) + n H(+)(out). NDH-1 shuttles electrons from an unknown electron donor, via FMN and iron-sulfur (Fe-S) centers, to quinones in the respiratory and/or the photosynthetic chain. The immediate electron acceptor for the enzyme in this species is believed to be plastoquinone. Couples the redox reaction to proton translocation, and thus conserves the redox energy in a proton gradient. Cyanobacterial NDH-1 also plays a role in inorganic carbon-concentration. This Nostoc sp. (strain PCC 7120 / SAG 25.82 / UTEX 2576) protein is NAD(P)H-quinone oxidoreductase subunit 4L.